The sequence spans 475 residues: MEGLLTRCRTLSALAACSLRHCRYIIHKCYHRAPGRGQRLVLSRMFQPQNLREDQVLSLEGRASDLTCKSQRLMLQVGLILPASPGCYHLMPYTVRAVEKLVRVIDQEMQAIGGQKINMPSLSPAELWRATSRWDLMGRELLRLRDRHGKEYCLGPTHEEAVTALVASQKKLSYKQLPLLLYQVTRKFRDEPRPRFGLLRGREFYMKDMYTFDSSSEAAQETYGLVCDAYCRLFDRLGLQWMKARADVGSIGGTMSHEFQLPVDIGEDRLVVCPSCHFSANTEILDLSQKICPDCQGPLTETKGIEVGHTFYLSTKYSSIFNALFTNAHGESLLAEMGCYGLGVTRILAAAIEVLSTEDCIRWPRLLAPYQVCVIPPKKGSKETAATEIVEKLYDDIMEAVPQLRGEVLLDDRTHLTIGNRLKDANKLGYPFVIIAGKRALEDPAHFEVWSQNTGEVVFLTKEGVMELLTGVHVV.

Residues 1 to 29 (MEGLLTRCRTLSALAACSLRHCRYIIHKC) constitute a mitochondrion transit peptide.

Belongs to the class-II aminoacyl-tRNA synthetase family.

It localises to the mitochondrion matrix. It catalyses the reaction tRNA(Pro) + L-proline + ATP = L-prolyl-tRNA(Pro) + AMP + diphosphate. Mitochondrial aminoacyl-tRNA synthetase that catalyzes the specific attachment of the proline amino acid (aa) to the homologous transfer RNA (tRNA), further participating in protein synthesis. The reaction occurs in a two steps: proline is first activated by ATP to form Pro-AMP and then transferred to the acceptor end of tRNA(Pro). This Mus musculus (Mouse) protein is Probable proline--tRNA ligase, mitochondrial (Pars2).